The sequence spans 442 residues: Protein IQ-DOMAIN 33 (442 aa).

Residues 159–188 (EEDAAVIIQSAFRSYLAIRRSKEEEETFAK) form the IQ domain. The disordered stretch occupies residues 184–212 (ETFAKEESFSGEESQDNASMGTSLEAQTG). Over residues 199–212 (DNASMGTSLEAQTG) the composition is skewed to polar residues. A calmodulin-binding region spans residues 270–282 (RERALAYAFSQQL). The interval 375–442 (EKSSFKPSIS…ETSHKLNSST (68 aa)) is disordered. A compositionally biased stretch (basic residues) spans 383–402 (ISKRKSVPSYKSQRKHHKLQ). The short motif at 385–392 (KRKSVPSY) is the Nuclear localization signal element.

This sequence belongs to the IQD family. Binds to multiple calmodulin (CaM) in the presence of Ca(2+) and CaM-like proteins.

The protein resides in the nucleus. Functionally, may be involved in cooperative interactions with calmodulins or calmodulin-like proteins. Recruits calmodulin proteins to microtubules, thus being a potential scaffold in cellular signaling and trafficking. May associate with nucleic acids and regulate gene expression at the transcriptional or post-transcriptional level. The polypeptide is Protein IQ-DOMAIN 33 (Arabidopsis thaliana (Mouse-ear cress)).